We begin with the raw amino-acid sequence, 350 residues long: Probable 2-dehydropantoate 2-reductase (350 aa).

NADP(+) contacts are provided by residues 9 to 14 (GAGSIG) and Asn115. Asn115 is a substrate binding site. Residue Lys213 is the Proton donor of the active site. Residues Asn217, Asn221, and Ser295 each coordinate substrate. Glu307 is an NADP(+) binding site.

This sequence belongs to the ketopantoate reductase family.

The catalysed reaction is (R)-pantoate + NADP(+) = 2-dehydropantoate + NADPH + H(+). It participates in cofactor biosynthesis; (R)-pantothenate biosynthesis; (R)-pantoate from 3-methyl-2-oxobutanoate: step 2/2. Its function is as follows. Catalyzes the NADPH-dependent reduction of ketopantoate into pantoic acid. This Schizosaccharomyces pombe (strain 972 / ATCC 24843) (Fission yeast) protein is Probable 2-dehydropantoate 2-reductase.